We begin with the raw amino-acid sequence, 154 residues long: MTRKEIEEIVTEIANPVVNKHSFELVDVEFIKEGSSWYLRIYIDKPGGITIDDCQVVSEEISDILDKEDPIPHSYFLEVSSPGLDRPLKKESDFERFKGELVEVKVFKPIEGKKIFEGELVGYKDNKIIIKKNGNELMEFERDKVALVRRVIKF.

The protein belongs to the RimP family.

It localises to the cytoplasm. Required for maturation of 30S ribosomal subunits. The chain is Ribosome maturation factor RimP from Acetivibrio thermocellus (strain ATCC 27405 / DSM 1237 / JCM 9322 / NBRC 103400 / NCIMB 10682 / NRRL B-4536 / VPI 7372) (Clostridium thermocellum).